We begin with the raw amino-acid sequence, 156 residues long: Ribosomally synthesized cyclic peptide victorin precursosr vicA1 (156 aa).

An N-terminal signal peptide occupies residues 1-21 (MVRITALMSGSILLFALQALA). 7 consecutive propeptides follow at residues 22–36 (MPVETTSVEPAAEKR), 43–55 (KRGEEVEPAEEKR), 62–74 (KRGEEVEPAEEKR), 81–93 (KRGEEVEPAEEKR), 100–112 (KRGEEVEPAEEKR), 119–131 (KRGEEVEPAEEKR), and 138–150 (KRGEEVEPAEEKR).

VicA1 is processed by several endopeptidases including kexin proteases as well as the cluster-specific peptidases vicP1 and vicP2 to produce 7 identical copies of the hexapeptide Gly-Leu-Lys-Leu-Ala-Phe, that are further modified to yield victorins. After being excised from the precursor peptide, the core peptides are cyclized and modified post-translationally by enzymes encoded within the gene cluster. The ustYa family protein vicYb is required for the formation of the macrocycle in victorin and the copper amine oxidases (CAOs) vicK1 and vicK2 are responsible for converting victorin to the active form by oxidizing the N-terminal glycyl residue in the peptides to glyoxylate. Relaxed substrate specificity of enzymes in the victorin biosynthetic pathway results in a metabolic grid that produces a set of analogs including victorinines B, C, E or HV-toxin M.

The protein operates within mycotoxin biosynthesis. Its function is as follows. Ribosomally synthesized cyclic peptide victorin precursor, part of the gene cluster that mediates the biosynthesis of the secondary metabolite victorin, the molecular basis for Victoria blight of oats. The vicA1 translated product contains a 7-fold repeated peptide embedding the hexapeptide Gly-Leu-Lys-Leu-Ala-Phe, that is converted into the cyclic victorin. The polypeptide is Ribosomally synthesized cyclic peptide victorin precursosr vicA1 (Bipolaris victoriae (strain FI3) (Victoria blight of oats agent)).